The sequence spans 403 residues: Decapping and exoribonuclease protein 1 (403 aa).

An a divalent metal cation-binding site is contributed by E223. Position 260 (E260) interacts with substrate. D262, E273, and I274 together coordinate a divalent metal cation. Substrate is bound by residues K275 and Q297.

The protein belongs to the DXO/Dom3Z family. It depends on a divalent metal cation as a cofactor.

The protein localises to the cytoplasm. It carries out the reaction a 5'-end NAD(+)-phospho-ribonucleoside in mRNA + H2O = a 5'-end phospho-ribonucleoside in mRNA + NAD(+) + H(+). It catalyses the reaction a 5'-end (N(7)-methyl 5'-triphosphoguanosine)-ribonucleoside-ribonucleotide in mRNA + H2O = a (N(7)-methyl 5'-triphosphoguanosine)-nucleoside + a 5'-end phospho-ribonucleoside in mRNA + H(+). Functionally, decapping enzyme for NAD-capped RNAs: specifically hydrolyzes the nicotinamide adenine dinucleotide (NAD) cap from a subset of RNAs by removing the entire NAD moiety from the 5'-end of an NAD-capped RNA. The NAD-cap is present at the 5'-end of some RNAs and snoRNAs. In contrast to the canonical 5'-end N7 methylguanosine (m7G) cap, the NAD cap promotes mRNA decay. Also acts as a non-canonical decapping enzyme that removes the entire cap structure of m7G capped or incompletely capped RNAs and mediates their subsequent degradation. Has decapping and 5'-3' exonuclease activities. Has decapping activity toward incomplete 5'-end cap mRNAs such as unmethylated 5'-end-capped RNA to release GpppN and 5'-end monophosphate RNA. The 5'-end monophosphate RNA is then degraded by the 5'-3' exoribonuclease activity, enabling this enzyme to decap and degrade incompletely capped mRNAs. The sequence is that of Decapping and exoribonuclease protein 1 from Kluyveromyces lactis (strain ATCC 8585 / CBS 2359 / DSM 70799 / NBRC 1267 / NRRL Y-1140 / WM37) (Yeast).